The sequence spans 394 residues: MAKEKFERSKPHVNVGTIGHVDHGKTTLTAAITKVMAEKNGGMARKFDEIDSAPEEKARGITINTSHVEYESPNRHYAHVDCPGHADYVKNMITGAAQMDGAILVCSAADGPMPQTREHILLSRQVGVPKIVVFLNKCDMVDDEELLELVEMEVRELLDQYEFPGDDTPVIMGSALRAIEGDEAYVEKIVELVQAMDDYIPAPERDTEKPFILPIEDVFSISGRGTVVTGRIERGVVNVGDEVEVVGIRPTQKTTVTGVEMFRKLLDRGEAGDNVGILVRGLKRDDVERGQVLCKPGSIKPHTKFEAEVYVLSKEEGGRHTPFFKGYRPQFYFRTTDITGAVELPEGVEMVMPGDNVKMTITLINPIAMDEGLRFAIREGGRTVGAGVVAKIIE.

Residues 10–204 (KPHVNVGTIG…AMDDYIPAPE (195 aa)) enclose the tr-type G domain. The tract at residues 19 to 26 (GHVDHGKT) is G1. 19-26 (GHVDHGKT) is a GTP binding site. T26 is a binding site for Mg(2+). Positions 60-64 (GITIN) are G2. Residues 81-84 (DCPG) form a G3 region. GTP contacts are provided by residues 81–85 (DCPGH) and 136–139 (NKCD). The interval 136 to 139 (NKCD) is G4. Residues 174–176 (SAL) form a G5 region.

This sequence belongs to the TRAFAC class translation factor GTPase superfamily. Classic translation factor GTPase family. EF-Tu/EF-1A subfamily. As to quaternary structure, monomer.

It is found in the cytoplasm. The enzyme catalyses GTP + H2O = GDP + phosphate + H(+). In terms of biological role, GTP hydrolase that promotes the GTP-dependent binding of aminoacyl-tRNA to the A-site of ribosomes during protein biosynthesis. In Francisella tularensis subsp. holarctica (strain FTNF002-00 / FTA), this protein is Elongation factor Tu.